The primary structure comprises 673 residues: Annexin A6 (673 aa).

Ala2 carries the N-acetylalanine modification. Phosphoserine is present on Ser13. Annexin repeat units follow at residues 20 to 91 (FDAN…NLMR), 92 to 163 (PLAY…VLLQ), 175 to 247 (DLVQ…AVVK), 251 to 322 (STPE…KLCG), 363 to 434 (FNPD…GLMM), 435 to 506 (PPAH…SLAT), 521 to 595 (EDAQ…AIVQ), and 599 to 670 (NKPL…ALCG). Tyr30 is modified (phosphotyrosine). Lys63, Lys68, Lys75, and Lys81 each carry N6-acetyllysine. Tyr201 is subject to Phosphotyrosine. N6-acetyllysine occurs at positions 306, 370, and 418. Ser422 carries the post-translational modification Phosphoserine. Lys483 carries the N6-acetyllysine modification. Ser537 bears the Phosphoserine mark. An N6-acetyllysine modification is found at Lys620.

The protein belongs to the annexin family.

It is found in the cytoplasm. The protein resides in the melanosome. Its function is as follows. May associate with CD21. May regulate the release of Ca(2+) from intracellular stores. This is Annexin A6 (Anxa6) from Rattus norvegicus (Rat).